Consider the following 543-residue polypeptide: CTP synthase (543 aa).

The tract at residues 1-265 is amidoligase domain; it reads MTRFVFITGG…DTEVLRHFGL (265 aa). Serine 13 is a CTP binding site. Serine 13 serves as a coordination point for UTP. 14 to 19 provides a ligand contact to ATP; that stretch reads SLGKGI. Tyrosine 54 provides a ligand contact to L-glutamine. Residue aspartate 71 coordinates ATP. Aspartate 71 and glutamate 139 together coordinate Mg(2+). Residues 146–148, 186–191, and lysine 222 contribute to the CTP site; these read DIE and KTKPTQ. UTP is bound by residues 186–191 and lysine 222; that span reads KTKPTQ. A Glutamine amidotransferase type-1 domain is found at 291–542; the sequence is RIAVVGKYTA…VGAAVKKMRL (252 aa). Glycine 354 contributes to the L-glutamine binding site. The active-site Nucleophile; for glutamine hydrolysis is the cysteine 381. Residues 382–385, glutamate 405, and arginine 470 each bind L-glutamine; that span reads FGMQ. Residues histidine 515 and glutamate 517 contribute to the active site.

This sequence belongs to the CTP synthase family. As to quaternary structure, homotetramer.

The catalysed reaction is UTP + L-glutamine + ATP + H2O = CTP + L-glutamate + ADP + phosphate + 2 H(+). The enzyme catalyses L-glutamine + H2O = L-glutamate + NH4(+). It catalyses the reaction UTP + NH4(+) + ATP = CTP + ADP + phosphate + 2 H(+). It functions in the pathway pyrimidine metabolism; CTP biosynthesis via de novo pathway; CTP from UDP: step 2/2. Allosterically activated by GTP, when glutamine is the substrate; GTP has no effect on the reaction when ammonia is the substrate. The allosteric effector GTP functions by stabilizing the protein conformation that binds the tetrahedral intermediate(s) formed during glutamine hydrolysis. Inhibited by the product CTP, via allosteric rather than competitive inhibition. Catalyzes the ATP-dependent amination of UTP to CTP with either L-glutamine or ammonia as the source of nitrogen. Regulates intracellular CTP levels through interactions with the four ribonucleotide triphosphates. The polypeptide is CTP synthase (Gluconacetobacter diazotrophicus (strain ATCC 49037 / DSM 5601 / CCUG 37298 / CIP 103539 / LMG 7603 / PAl5)).